The following is a 289-amino-acid chain: Putative transmembrane protein ORF111 (289 aa).

5 helical membrane-spanning segments follow: residues 1–21 (MIGPIVVLHLICAVGFSIFML), 112–132 (AIITIAIVGVVIGVFIIVCIA), 151–171 (IGITLFLLFLTLAGSVAFIVI), 189–209 (LNISWGFVCGILAISYSTSIL), and 261–281 (YLLTLCLLWWPAITIYFIGVG).

Its subcellular location is the host membrane. This chain is Putative transmembrane protein ORF111, found in Ostreid herpesvirus 1 (isolate France) (OsHV-1).